Here is a 46-residue protein sequence, read N- to C-terminus: Viscotoxin-C1 (46 aa).

Cystine bridges form between C3–C40, C4–C32, and C16–C26.

In terms of assembly, monomer.

It localises to the secreted. Functionally, thionins are small plant proteins which are toxic to animal cells. They seem to exert their toxic effect at the level of the cell membrane. Their precise function is not known. The protein is Viscotoxin-C1 of Viscum album (European mistletoe).